The following is a 319-amino-acid chain: MSAAATMAPVSLRIHAIAYGADDVLLFDLRAPARDGLAPFDAGAHIDLRLPRGITRSYSLLNDPAERHRYVIGVKREPESRGGSAWLHADARVGALIEVDGPSNHFALDESAPHAVFIAGGIGITPLWSMVQRLEHLGTPWTLHYRARSRRGAALLDELAGHGDRVHLSFSDEGAPSLDLAAIVAAAPEGAHFYCCGPVPMLEAFEAACVGLDPARVHLEYFAAKEAPATEGGFVVHLARSGRTIPIAAGCTILDALQAGGVAVPSSCQQGVCGICETAVLAGVPDHRDLVLSDQERAAGRTMMICCSGSKTAELTLDL.

The region spanning 7–109 is the FAD-binding FR-type domain; that stretch reads MAPVSLRIHA…DGPSNHFALD (103 aa). 113–223 contributes to the NAD(+) binding site; the sequence is PHAVFIAGGI…PARVHLEYFA (111 aa). In terms of domain architecture, 2Fe-2S ferredoxin-type spans 234–319; sequence FVVHLARSGR…SKTAELTLDL (86 aa). [2Fe-2S] cluster-binding residues include Cys-268, Cys-273, Cys-276, and Cys-306.

It belongs to the PDR/VanB family. In terms of assembly, this dioxygenase system consists of two proteins: the alpha subunit (PobA) and a subunit (PobB) that acts as a ferredoxin and a ferredoxin reductase. Requires FMN as cofactor.

Its pathway is aromatic compound metabolism; carboxydiphenyl ether degradation. In terms of biological role, degrades exclusively diarylether compounds having carboxyl groups in the 3- or 4-position. Yields a hemiacetal that spontaneously hydrolyzes to phenol and protocatechuate. This chain is Phenoxybenzoate dioxygenase subunit beta (pobB), found in Ectopseudomonas oleovorans (Pseudomonas oleovorans).